The sequence spans 348 residues: 4-hydroxy-3-methylbut-2-en-1-yl diphosphate synthase (flavodoxin) (348 aa).

The [4Fe-4S] cluster site is built by C263, C266, C298, and E305.

This sequence belongs to the IspG family. [4Fe-4S] cluster serves as cofactor.

The enzyme catalyses (2E)-4-hydroxy-3-methylbut-2-enyl diphosphate + oxidized [flavodoxin] + H2O + 2 H(+) = 2-C-methyl-D-erythritol 2,4-cyclic diphosphate + reduced [flavodoxin]. The protein operates within isoprenoid biosynthesis; isopentenyl diphosphate biosynthesis via DXP pathway; isopentenyl diphosphate from 1-deoxy-D-xylulose 5-phosphate: step 5/6. Its function is as follows. Converts 2C-methyl-D-erythritol 2,4-cyclodiphosphate (ME-2,4cPP) into 1-hydroxy-2-methyl-2-(E)-butenyl 4-diphosphate. This is 4-hydroxy-3-methylbut-2-en-1-yl diphosphate synthase (flavodoxin) from Dehalococcoides mccartyi (strain CBDB1).